Here is a 425-residue protein sequence, read N- to C-terminus: UPF0761 membrane protein xcc-b100_3490 (425 aa).

The next 6 membrane-spanning stretches (helical) occupy residues 48-68 (VFALVPLAIVVFGVLSAFPAF), 105-125 (FTVAGMVALVASLLITLHSIE), 154-174 (GTMLAAASMAMAAYVFALPLF), 182-202 (LAEFAWRLAPMAVEFVCIVLI), 216-236 (ALPGALLAVILMEIVKWGFGF), and 250-270 (ALSALPILLLWIYLSWVSVLL).

The protein belongs to the UPF0761 family.

It is found in the cell inner membrane. This is UPF0761 membrane protein xcc-b100_3490 from Xanthomonas campestris pv. campestris (strain B100).